Reading from the N-terminus, the 204-residue chain is MLHSLFRLTLLFYALFNSLGSLPVFVALLKKFSFRKQQRIILRECIFALLTLILFITFGQGFFRLLEVSLPAFQLTGGILLGSLAINMMKALPSQEETFDQYEDEPIFYPLAFPVITGPATITSTLGHMEEGIFPKELVLGAIMLAWAFSLITLFFSSSINRLFGQMGLLALERLFGISLALMAGNLMLKAISTAFNIGYYVMA.

The next 6 helical transmembrane spans lie at 8 to 28 (LTLL…FVAL), 46 to 66 (IFAL…FRLL), 68 to 88 (VSLP…AINM), 107 to 127 (IFYP…STLG), 138 to 158 (LVLG…FFSS), and 176 to 196 (FGIS…STAF).

Belongs to the UPF0056 (MarC) family.

It is found in the cell membrane. This chain is UPF0056 membrane protein TC_0241, found in Chlamydia muridarum (strain MoPn / Nigg).